The chain runs to 340 residues: Replication factor C subunit 5 (340 aa).

Residue M1 is modified to N-acetylmethionine. 60-67 is an ATP binding site; it reads GPPGTGKT.

This sequence belongs to the activator 1 small subunits family. In terms of assembly, subunit of the RFC complex, an heteropentameric complex consisting of a large subunit RFC1 and four small subunits RFC2, RFC3, RFC4 and RFC5; the RFC complex interacts with PCNA. Forms an heterotetrameric complex with RFC2, RFC3 and RFC4; this complex has ATPase activity but is not stimulated by PCNA. The heterotetramer of subunits RFC2, RFC3, RFC4 and RFC5 interacts with RAD17.

It is found in the nucleus. Its function is as follows. Subunit of the replication factor C (RFC) complex which acts during elongation of primed DNA templates by DNA polymerases delta and epsilon, and is necessary for ATP-dependent loading of proliferating cell nuclear antigen (PCNA) onto primed DNA. This chain is Replication factor C subunit 5 (RFC5), found in Homo sapiens (Human).